Reading from the N-terminus, the 157-residue chain is Ribonuclease H (157 aa).

The RNase H type-1 domain maps to 1 to 146 (MPDLVAYTDG…ADELARAGMA (146 aa)). Mg(2+) contacts are provided by D9, E52, D74, and D138.

This sequence belongs to the RNase H family. As to quaternary structure, monomer. Requires Mg(2+) as cofactor.

Its subcellular location is the cytoplasm. It catalyses the reaction Endonucleolytic cleavage to 5'-phosphomonoester.. Endonuclease that specifically degrades the RNA of RNA-DNA hybrids. This Jannaschia sp. (strain CCS1) protein is Ribonuclease H.